We begin with the raw amino-acid sequence, 511 residues long: Vesicular acetylcholine transporter (511 aa).

Topologically, residues 1 to 36 (MVVGQAKAAMGKISSAIGERSKRISGAMNEPLRKRK) are cytoplasmic. The helical transmembrane segment at 37–57 (ILLVIVCIAMLLDNMLYMVIV) threads the bilayer. At 58-108 (PIVPNYLETIRTYKLVYITIPSNGTNGSLLNSTQRAVLERNPNANEDIQIG) the chain is on the lumenal, vesicle side. 3 N-linked (GlcNAc...) asparagine glycosylation sites follow: N80, N83, and N88. A helical membrane pass occupies residues 109–129 (VLFASKAILQLLSNPFTGTFI). Residues 130–135 (DRVGYD) are Cytoplasmic-facing. The helical transmembrane segment at 136–156 (IPLLIGLTIMFFSTITFAFGE) threads the bilayer. Residues 157-165 (SYAILFAAR) lie on the Lumenal, vesicle side of the membrane. The helical transmembrane segment at 166–186 (SLQGLGSAFADTSGIAMIADK) threads the bilayer. The Cytoplasmic segment spans residues 187–197 (YTEESERTQAL). Residues 198–218 (GIALAFISFGSLVAPPFGGVL) traverse the membrane as a helical segment. At 219–225 (YQFAGKW) the chain is on the lumenal, vesicle side. Residues 226–246 (VPFLVLSFVCLLDGILLLMVV) form a helical membrane-spanning segment. At 247–267 (TPFASRTRGNTLQGTPIHKLM) the chain is on the cytoplasmic side. Residues 268–288 (IDPYIAVVAGALTTCNIPLAF) traverse the membrane as a helical segment. Residues 289 to 306 (LEPTISNWMKKTMNASEW) are Lumenal, vesicle-facing. An N-linked (GlcNAc...) asparagine glycan is attached at N302. Residues 307-327 (QMGITWLPAFFPHILGVYITV) form a helical membrane-spanning segment. Residues 328–337 (KLAAKYPNYQ) lie on the Cytoplasmic side of the membrane. A helical transmembrane segment spans residues 338 to 358 (WLYGAFGLVIIGVSSCTIPAC). At 359-363 (RNFEE) the chain is on the lumenal, vesicle side. A helical membrane pass occupies residues 364-384 (LIIPLCALCFGIALVDTALLP). At 385–400 (TLAFLVDIRYVSVYGS) the chain is on the cytoplasmic side. A helical membrane pass occupies residues 401–421 (VYAIADISYSVAYALGPIMAG). Residues 422-428 (QIVHDLG) lie on the Lumenal, vesicle side of the membrane. Residues 429–449 (FVQLNLGMGLVNILYAPALLF) traverse the membrane as a helical segment. Residues 450–511 (LRNVCQMKPS…VLSDQEGYSE (62 aa)) are Cytoplasmic-facing. The segment at 486-511 (AKEPHGTSSGNHSVHAVLSDQEGYSE) is disordered.

This sequence belongs to the major facilitator superfamily. Vesicular transporter family. As to expression, high expression in the electric lobe of the brain.

It localises to the membrane. In terms of biological role, involved in acetylcholine transport into synaptic vesicles. The protein is Vesicular acetylcholine transporter of Torpedo torpedo (Common torpedo).